Consider the following 447-residue polypeptide: Ribosomal protein uS12 methylthiotransferase RimO (447 aa).

The MTTase N-terminal domain occupies 6-122 (EKVSMVSLGC…IAEIIEEKSS (117 aa)). [4Fe-4S] cluster contacts are provided by cysteine 15, cysteine 51, cysteine 85, cysteine 160, cysteine 164, and cysteine 167. The 231-residue stretch at 146 to 376 (SSPAYTAYLK…MKAQARVSFK (231 aa)) folds into the Radical SAM core domain. The TRAM domain occupies 379–447 (RRLIDTEEQV…DYDLIGEIIS (69 aa)).

This sequence belongs to the methylthiotransferase family. RimO subfamily. [4Fe-4S] cluster is required as a cofactor.

The protein resides in the cytoplasm. It catalyses the reaction L-aspartate(89)-[ribosomal protein uS12]-hydrogen + (sulfur carrier)-SH + AH2 + 2 S-adenosyl-L-methionine = 3-methylsulfanyl-L-aspartate(89)-[ribosomal protein uS12]-hydrogen + (sulfur carrier)-H + 5'-deoxyadenosine + L-methionine + A + S-adenosyl-L-homocysteine + 2 H(+). Its function is as follows. Catalyzes the methylthiolation of an aspartic acid residue of ribosomal protein uS12. In Geobacter sulfurreducens (strain ATCC 51573 / DSM 12127 / PCA), this protein is Ribosomal protein uS12 methylthiotransferase RimO.